The primary structure comprises 152 residues: Ribosomal RNA large subunit methyltransferase H (152 aa).

S-adenosyl-L-methionine is bound by residues leucine 68, glycine 100, and 119–124 (LGVMTW).

It belongs to the RNA methyltransferase RlmH family. Homodimer.

It localises to the cytoplasm. The catalysed reaction is pseudouridine(1915) in 23S rRNA + S-adenosyl-L-methionine = N(3)-methylpseudouridine(1915) in 23S rRNA + S-adenosyl-L-homocysteine + H(+). Functionally, specifically methylates the pseudouridine at position 1915 (m3Psi1915) in 23S rRNA. The protein is Ribosomal RNA large subunit methyltransferase H of Rhodospirillum rubrum (strain ATCC 11170 / ATH 1.1.1 / DSM 467 / LMG 4362 / NCIMB 8255 / S1).